Consider the following 248-residue polypeptide: Endonuclease V (248 aa).

Aspartate 54 and aspartate 118 together coordinate Mg(2+).

The protein belongs to the endonuclease V family. Requires Mg(2+) as cofactor.

Its subcellular location is the cytoplasm. The enzyme catalyses Endonucleolytic cleavage at apurinic or apyrimidinic sites to products with a 5'-phosphate.. Functionally, DNA repair enzyme involved in the repair of deaminated bases. Selectively cleaves double-stranded DNA at the second phosphodiester bond 3' to a deoxyinosine leaving behind the intact lesion on the nicked DNA. The chain is Endonuclease V from Natronomonas pharaonis (strain ATCC 35678 / DSM 2160 / CIP 103997 / JCM 8858 / NBRC 14720 / NCIMB 2260 / Gabara) (Halobacterium pharaonis).